A 286-amino-acid chain; its full sequence is uncharacterized protein (286 aa).

A signal peptide spans Met1–Ser19.

This is an uncharacterized protein from Acidianus filamentous virus 2 (isolate Italy/Pozzuoli) (AFV-2).